A 188-amino-acid chain; its full sequence is Protein SSX4 (188 aa).

Positions 20 to 83 (KLRKAFDDIA…KRAADFHGND (64 aa)) constitute a KRAB-related domain. Over residues 116-127 (PAEEENGLKEVP) the composition is skewed to basic and acidic residues. A disordered region spans residues 116-167 (PAEEENGLKEVPEASGPQNDGKQLCPPGNPSTLEKINKTSGPKRGKHAWTHR). Residues 145–155 (PSTLEKINKTS) are compositionally biased toward polar residues. Residues 156 to 167 (GPKRGKHAWTHR) are compositionally biased toward basic residues.

The protein belongs to the SSX family.

In terms of biological role, could act as a modulator of transcription. In Homo sapiens (Human), this protein is Protein SSX4 (SSX4).